A 264-amino-acid chain; its full sequence is Thymidylate synthase (264 aa).

R21 contributes to the dUMP binding site. H51 contributes to the (6R)-5,10-methylene-5,6,7,8-tetrahydrofolate binding site. 126-127 (RR) lines the dUMP pocket. C146 serves as the catalytic Nucleophile. Residues 166 to 169 (RSAD), N177, and 207 to 209 (HLY) each bind dUMP. D169 provides a ligand contact to (6R)-5,10-methylene-5,6,7,8-tetrahydrofolate. A263 contributes to the (6R)-5,10-methylene-5,6,7,8-tetrahydrofolate binding site.

It belongs to the thymidylate synthase family. Bacterial-type ThyA subfamily. Homodimer.

It is found in the cytoplasm. It carries out the reaction dUMP + (6R)-5,10-methylene-5,6,7,8-tetrahydrofolate = 7,8-dihydrofolate + dTMP. It functions in the pathway pyrimidine metabolism; dTTP biosynthesis. Its function is as follows. Catalyzes the reductive methylation of 2'-deoxyuridine-5'-monophosphate (dUMP) to 2'-deoxythymidine-5'-monophosphate (dTMP) while utilizing 5,10-methylenetetrahydrofolate (mTHF) as the methyl donor and reductant in the reaction, yielding dihydrofolate (DHF) as a by-product. This enzymatic reaction provides an intracellular de novo source of dTMP, an essential precursor for DNA biosynthesis. The protein is Thymidylate synthase of Legionella pneumophila (strain Corby).